The sequence spans 227 residues: Enolase-phosphatase E1 (227 aa).

This sequence belongs to the HAD-like hydrolase superfamily. MasA/MtnC family. Monomer. Mg(2+) is required as a cofactor.

The enzyme catalyses 5-methylsulfanyl-2,3-dioxopentyl phosphate + H2O = 1,2-dihydroxy-5-(methylsulfanyl)pent-1-en-3-one + phosphate. It participates in amino-acid biosynthesis; L-methionine biosynthesis via salvage pathway; L-methionine from S-methyl-5-thio-alpha-D-ribose 1-phosphate: step 3/6. Its pathway is amino-acid biosynthesis; L-methionine biosynthesis via salvage pathway; L-methionine from S-methyl-5-thio-alpha-D-ribose 1-phosphate: step 4/6. Functionally, bifunctional enzyme that catalyzes the enolization of 2,3-diketo-5-methylthiopentyl-1-phosphate (DK-MTP-1-P) into the intermediate 2-hydroxy-3-keto-5-methylthiopentenyl-1-phosphate (HK-MTPenyl-1-P), which is then dephosphorylated to form the acireductone 1,2-dihydroxy-3-keto-5-methylthiopentene (DHK-MTPene). The sequence is that of Enolase-phosphatase E1 from Gluconobacter oxydans (strain 621H) (Gluconobacter suboxydans).